The primary structure comprises 104 residues: Protein E7 (104 aa).

Residues 1-49 (MRGNAPTLKDIILYDLPTCDPTTCDTPPVDLYCYEQFDTSDEDDEDDDQ) form an E7 terminal domain region. Positions 31–35 (LYCYE) match the LXCXE motif; interaction with host RB1 and TMEM173/STING motif. Residues 64-100 (CTQCGRSVKLVVSSTGADIQQLHQMLLDTLGIVCPLC) fold into a zinc finger. The short motif at 82-90 (IQQLHQMLL) is the Nuclear export signal element.

Belongs to the papillomaviridae E7 protein family. As to quaternary structure, homodimer. Homooligomer. Interacts with host RB1; this interaction induces dissociation of RB1-E2F1 complex thereby disrupting RB1 activity. Interacts with host EP300; this interaction represses EP300 transcriptional activity. Interacts with protein E2; this interaction inhibits E7 oncogenic activity. Interacts with host TMEM173/STING; this interaction impairs the ability of TMEM173/STING to sense cytosolic DNA and promote the production of type I interferon (IFN-alpha and IFN-beta). Post-translationally, highly phosphorylated.

The protein localises to the host cytoplasm. The protein resides in the host nucleus. Its function is as follows. Plays a role in viral genome replication by driving entry of quiescent cells into the cell cycle. Stimulation of progression from G1 to S phase allows the virus to efficiently use the cellular DNA replicating machinery to achieve viral genome replication. E7 protein has both transforming and trans-activating activities. Induces the disassembly of the E2F1 transcription factor from RB1, with subsequent transcriptional activation of E2F1-regulated S-phase genes. Interferes with host histone deacetylation mediated by HDAC1 and HDAC2, leading to transcription activation. Also plays a role in the inhibition of both antiviral and antiproliferative functions of host interferon alpha. Interaction with host TMEM173/STING impairs the ability of TMEM173/STING to sense cytosolic DNA and promote the production of type I interferon (IFN-alpha and IFN-beta). The sequence is that of Protein E7 from Homo sapiens (Human).